A 930-amino-acid chain; its full sequence is Isoleucine--tRNA ligase (930 aa).

Residues 57–67 carry the 'HIGH' region motif; it reads PYANGNIHVGH. An L-isoleucyl-5'-AMP-binding site is contributed by Glu-554. The 'KMSKS' region signature appears at 595–599; it reads KMSKS. Lys-598 serves as a coordination point for ATP. 4 residues coordinate Zn(2+): Cys-888, Cys-891, Cys-908, and Cys-911.

It belongs to the class-I aminoacyl-tRNA synthetase family. IleS type 1 subfamily. As to quaternary structure, monomer. Zn(2+) serves as cofactor.

It is found in the cytoplasm. The catalysed reaction is tRNA(Ile) + L-isoleucine + ATP = L-isoleucyl-tRNA(Ile) + AMP + diphosphate. Functionally, catalyzes the attachment of isoleucine to tRNA(Ile). As IleRS can inadvertently accommodate and process structurally similar amino acids such as valine, to avoid such errors it has two additional distinct tRNA(Ile)-dependent editing activities. One activity is designated as 'pretransfer' editing and involves the hydrolysis of activated Val-AMP. The other activity is designated 'posttransfer' editing and involves deacylation of mischarged Val-tRNA(Ile). The sequence is that of Isoleucine--tRNA ligase from Streptococcus pneumoniae (strain ATCC BAA-255 / R6).